A 403-amino-acid chain; its full sequence is Palmitoyltransferase ZDHHC23-A (403 aa).

The Cytoplasmic segment spans residues 1 to 70 (MKRERFKPPE…ADRLGVSCCT (70 aa)). Residues 71–91 (VGPLRLELSVLPPMVLIPGLL) form a helical membrane-spanning segment. Arg92 is a topological domain (lumenal). The helical transmembrane segment at 93–113 (VAAINCLLGVIILTALPLLVL) threads the bilayer. Residues 114–125 (WYYYMTHRRKRR) are Cytoplasmic-facing. Residues 126 to 146 (TLFFLSLALFSLAYMYYLFLT) traverse the membrane as a helical segment. At 147 to 153 (EIVPRGD) the chain is on the lumenal side. A helical transmembrane segment spans residues 154–174 (VTHLQVVTATTGMMLTLISLV). Topologically, residues 175-268 (RTKQGPGFVK…NSCVGQANHR (94 aa)) are cytoplasmic. The 51-residue stretch at 225 to 275 (KKCPVCQLVRPPRAGHCRICGACVLRMDHHCVWINSCVGQANHRQFILTLL) folds into the DHHC domain. Cys255 acts as the S-palmitoyl cysteine intermediate in catalysis. The chain crosses the membrane as a helical span at residues 269–289 (QFILTLLLFLLTSFYGISLVL). The Lumenal segment spans residues 290–319 (RSICPKQSLFTAMLYCPGVYNQYSTALCFT). Residues 320-340 (CVWYSVIITGGLLHLFILQII) traverse the membrane as a helical segment. Topologically, residues 341–403 (NVSCNVTERE…GSSLNLTDMV (63 aa)) are cytoplasmic.

This sequence belongs to the DHHC palmitoyltransferase family.

It is found in the golgi apparatus membrane. The protein resides in the golgi apparatus. The protein localises to the trans-Golgi network membrane. It catalyses the reaction L-cysteinyl-[protein] + hexadecanoyl-CoA = S-hexadecanoyl-L-cysteinyl-[protein] + CoA. Functionally, palmitoyltransferase that could catalyze the addition of palmitate onto various protein substrates and be involved in a variety of cellular processes. This is Palmitoyltransferase ZDHHC23-A (zdhhc23a) from Danio rerio (Zebrafish).